The sequence spans 236 residues: Ureidoacrylate amidohydrolase RutB (236 aa).

Catalysis depends on Asp-24, which acts as the Proton acceptor. Residue Lys-133 is part of the active site. The Nucleophile role is filled by Cys-166.

Belongs to the isochorismatase family. RutB subfamily.

The enzyme catalyses (Z)-3-ureidoacrylate + H2O + H(+) = (Z)-3-aminoacrylate + NH4(+) + CO2. The catalysed reaction is (Z)-3-ureidoacrylate + H2O = (Z)-3-aminoacrylate + carbamate + H(+). It catalyses the reaction (Z)-2-methylureidoacrylate + H2O + H(+) = (Z)-2-methylaminoacrylate + NH4(+) + CO2. Its function is as follows. Hydrolyzes ureidoacrylate to form aminoacrylate and carbamate. The carbamate hydrolyzes spontaneously, thereby releasing one of the nitrogen atoms of the pyrimidine ring as ammonia and one of its carbon atoms as CO2. The protein is Ureidoacrylate amidohydrolase RutB of Klebsiella pneumoniae subsp. pneumoniae (strain ATCC 700721 / MGH 78578).